We begin with the raw amino-acid sequence, 62 residues long: MATLQDVHLRVNDRVTPVYFTARSFLLVSPKRAGQATFLAREEGTDNPVVTCHVSDFYKDGV.

Needed for optimal phage development. This chain is Protein P14 (P14), found in Pseudomonas savastanoi pv. phaseolicola (Pseudomonas syringae pv. phaseolicola).